The following is a 567-amino-acid chain: Urease subunit alpha (567 aa).

Residues 129-567 form the Urease domain; the sequence is GGIDTHIHWI…LPMAQRYFLF (439 aa). Ni(2+) is bound by residues His134, His136, and Lys217. At Lys217 the chain carries N6-carboxylysine. Residue His219 participates in substrate binding. Ni(2+) is bound by residues His246 and His272. Residue His320 is the Proton donor of the active site. A Ni(2+)-binding site is contributed by Asp360.

It belongs to the metallo-dependent hydrolases superfamily. Urease alpha subunit family. In terms of assembly, heterotrimer of UreA (gamma), UreB (beta) and UreC (alpha) subunits. Three heterotrimers associate to form the active enzyme. Ni cation is required as a cofactor. In terms of processing, carboxylation allows a single lysine to coordinate two nickel ions.

It localises to the cytoplasm. The enzyme catalyses urea + 2 H2O + H(+) = hydrogencarbonate + 2 NH4(+). It participates in nitrogen metabolism; urea degradation; CO(2) and NH(3) from urea (urease route): step 1/1. The sequence is that of Urease subunit alpha from Klebsiella pneumoniae (strain 342).